The primary structure comprises 486 residues: Arginine/agmatine antiporter (486 aa).

12 helical membrane passes run L12–S32, A41–A61, G85–G105, N129–L149, I160–A180, S211–A231, A242–F262, V296–I316, L341–T361, M367–F387, L418–L438, and E461–T481.

This sequence belongs to the amino acid-polyamine-organocation (APC) superfamily. Basic amino acid/polyamine antiporter (APA) (TC 2.A.3.2) family.

Its subcellular location is the cell inner membrane. Catalyzes the exchange of L-arginine for agmatine. The arginine uptake by the bacterium in the macrophage may be a virulence factor against the host innate immune response. This chain is Arginine/agmatine antiporter (aaxC), found in Chlamydia caviae (strain ATCC VR-813 / DSM 19441 / 03DC25 / GPIC) (Chlamydophila caviae).